The sequence spans 280 residues: Eukaryotic translation initiation factor 3 subunit F-1 (280 aa).

Residues 8–138 (VRVHPVVLFQ…LRSYVCIQLG (131 aa)) enclose the MPN domain.

Belongs to the eIF-3 subunit F family. In terms of assembly, component of the eukaryotic translation initiation factor 3 (eIF-3) complex. The eIF-3 complex interacts with pix.

The protein localises to the cytoplasm. In terms of biological role, component of the eukaryotic translation initiation factor 3 (eIF-3) complex, which is involved in protein synthesis of a specialized repertoire of mRNAs and, together with other initiation factors, stimulates binding of mRNA and methionyl-tRNAi to the 40S ribosome. The eIF-3 complex specifically targets and initiates translation of a subset of mRNAs involved in cell proliferation. This chain is Eukaryotic translation initiation factor 3 subunit F-1, found in Drosophila persimilis (Fruit fly).